The primary structure comprises 210 residues: Regulator of G-protein signaling 17 (210 aa).

A disordered region spans residues 1–21; sequence MRKRQQSQNEGTPAVSQAPGN. The RGS domain occupies 84–200; that stretch reads NFDKMMKAPA…LNSQIYKSFV (117 aa). Phosphotyrosine is present on tyrosine 137.

Interacts with GNAI1 and GNAQ. Interacts with GNAZ and GNAI2. Interacts with OPRM1. Forms a complex with mu-opioid receptors and G(alpha)z/i2 subunits, including GNAZ and GNAI2; the formation of this complex results in mu-opioid receptor desensitization. Interacts with HINT1. N- and O-glycosylated in synapsomal membranes. In terms of processing, serine phosphorylated in synapsomal membranes. Post-translationally, sumoylated with SUMO1 and SUM02 in synaptosomes. The sumoylated forms act as a scaffold for sequestering mu-opioid receptor-activated G(alpha) subunits. Desumoylated by HINT1. In terms of tissue distribution, predominantly expressed in the cerebellum. Also expressed in the cortex and medulla. Weakly expressed in a number of peripheral tissues notably spleen, lung and leukocytes.

The protein resides in the membrane. It is found in the synapse. Its subcellular location is the synaptosome. The protein localises to the nucleus. It localises to the cytoplasm. In terms of biological role, regulates G protein-coupled receptor signaling cascades, including signaling via muscarinic acetylcholine receptor CHRM2 and dopamine receptor DRD2. Inhibits signal transduction by increasing the GTPase activity of G protein alpha subunits, thereby driving them into their inactive GDP-bound form. Binds selectively to GNAZ and GNAI2 subunits, accelerates their GTPase activity and regulates their signaling activities. Negatively regulates mu-opioid receptor-mediated activation of the G-proteins. The sequence is that of Regulator of G-protein signaling 17 (RGS17) from Homo sapiens (Human).